The primary structure comprises 348 residues: Protein pelota homolog (348 aa).

Belongs to the eukaryotic release factor 1 family. Pelota subfamily. Monomer. A divalent metal cation is required as a cofactor.

It is found in the cytoplasm. Its function is as follows. May function in recognizing stalled ribosomes, interact with stem-loop structures in stalled mRNA molecules, and effect endonucleolytic cleavage of the mRNA. May play a role in the release non-functional ribosomes and degradation of damaged mRNAs. Has endoribonuclease activity. The sequence is that of Protein pelota homolog from Methanococcus aeolicus (strain ATCC BAA-1280 / DSM 17508 / OCM 812 / Nankai-3).